Consider the following 294-residue polypeptide: Homoserine kinase (294 aa).

Residue 84–94 (PFSRGLGSSSA) coordinates ATP.

The protein belongs to the GHMP kinase family. Homoserine kinase subfamily.

The protein localises to the cytoplasm. It catalyses the reaction L-homoserine + ATP = O-phospho-L-homoserine + ADP + H(+). It participates in amino-acid biosynthesis; L-threonine biosynthesis; L-threonine from L-aspartate: step 4/5. Its function is as follows. Catalyzes the ATP-dependent phosphorylation of L-homoserine to L-homoserine phosphate. This chain is Homoserine kinase, found in Campylobacter concisus (strain 13826).